A 289-amino-acid chain; its full sequence is MKLIILEHYSQASEWAAKYIRNRIIQFNPGPDKYFTLGLPTGSTPLGCYQKLIEYYKNGDLSFQYVKTFNMDEYVGLPRDHPESYHSFMWNNFFKHIDIHPENTHILDGNAADLQAECDAFEEKIQAAGGIELFVGGIGPDGHIAFNEPGSSLVSRTRVKTLAMDTILANARFFDGDLAKVPTMALTVGVGTVMDAKEVMILITGAHKAFALYKAIEEGVNHMWTVSAFQQHPRTVFVCDEDATLELKVKTVKYFKGLMLVHNKLVDPLYSIKEKEIQKSQSAKKPYSD.

D72 acts as the Proton acceptor; for enolization step in catalysis. The For ring-opening step role is filled by D141. H143 functions as the Proton acceptor; for ring-opening step in the catalytic mechanism. E148 (for ring-opening step) is an active-site residue. T161 carries the phosphothreonine modification.

The protein belongs to the glucosamine/galactosamine-6-phosphate isomerase family. In terms of assembly, homohexamer. In terms of tissue distribution, widely expressed. Detected in brain, liver, kidney, muscle, ovary, testis, spermatids and spermatozoa. In spermatids, located close to the developing acrosome vesicle. In spermatozoa, found close to the acrosomal region.

The protein localises to the cytoplasm. It carries out the reaction alpha-D-glucosamine 6-phosphate + H2O = beta-D-fructose 6-phosphate + NH4(+). Its pathway is nucleotide-sugar biosynthesis; UDP-N-acetyl-alpha-D-glucosamine biosynthesis; alpha-D-glucosamine 6-phosphate from D-fructose 6-phosphate: step 1/1. With respect to regulation, allosterically activated by N-acetylglucosamine-6-phosphate (GlcNAc6P). In terms of biological role, catalyzes the reversible conversion of alpha-D-glucosamine 6-phosphate (GlcN-6P) into beta-D-fructose 6-phosphate (Fru-6P) and ammonium ion, a regulatory reaction step in de novo uridine diphosphate-N-acetyl-alpha-D-glucosamine (UDP-GlcNAc) biosynthesis via hexosamine pathway. Deamination is coupled to aldo-keto isomerization mediating the metabolic flux from UDP-GlcNAc toward Fru-6P. At high ammonium level can drive amination and isomerization of Fru-6P toward hexosamines and UDP-GlcNAc synthesis. Has a role in fine tuning the metabolic fluctuations of cytosolic UDP-GlcNAc and their effects on hyaluronan synthesis that occur during tissue remodeling. Seems to trigger calcium oscillations in mammalian eggs. These oscillations serve as the essential trigger for egg activation and early development of the embryo. The protein is Glucosamine-6-phosphate deaminase 1 of Mus musculus (Mouse).